Consider the following 442-residue polypeptide: Tryptophan synthase beta chain 2 (442 aa).

The residue at position 110 (K110) is an N6-(pyridoxal phosphate)lysine.

The protein belongs to the TrpB family. In terms of assembly, tetramer of two alpha and two beta chains. It depends on pyridoxal 5'-phosphate as a cofactor.

The catalysed reaction is (1S,2R)-1-C-(indol-3-yl)glycerol 3-phosphate + L-serine = D-glyceraldehyde 3-phosphate + L-tryptophan + H2O. It functions in the pathway amino-acid biosynthesis; L-tryptophan biosynthesis; L-tryptophan from chorismate: step 5/5. Its function is as follows. The beta subunit is responsible for the synthesis of L-tryptophan from indole and L-serine. This is Tryptophan synthase beta chain 2 from Thermococcus kodakarensis (strain ATCC BAA-918 / JCM 12380 / KOD1) (Pyrococcus kodakaraensis (strain KOD1)).